The following is a 205-amino-acid chain: Urease accessory protein UreE (205 aa).

The interval A171–S205 is disordered. Over residues H177–G196 the composition is skewed to basic residues.

It belongs to the UreE family.

It is found in the cytoplasm. Its function is as follows. Involved in urease metallocenter assembly. Binds nickel. Probably functions as a nickel donor during metallocenter assembly. This is Urease accessory protein UreE from Bordetella parapertussis (strain 12822 / ATCC BAA-587 / NCTC 13253).